The following is a 175-amino-acid chain: MRFVNTLPLIFGLTAALGSSMALALPSDREQPIRVQADSAELDDKQGVAVYRGDVVVTQGSTKLTGNTVTLKQDKNGDIEVVTSVGKPAYYEQKPAPDKDVTKAYGLTIQYFVTQNRVVLIDQAKVIQEGNTFEGEKIVYDTQRQIVNAGRATGSQVTSPRPRIDMVIQPKKKAQ.

The N-terminal stretch at 1-24 is a signal peptide; it reads MRFVNTLPLIFGLTAALGSSMALA.

It belongs to the LptA family. In terms of assembly, component of the lipopolysaccharide transport and assembly complex. Mainly exists as a dimer in solution. Tends to oligomerize already in solution. The protomers follow one another in a head-to-tail fashion throughout the crystal lattice, yielding a continuous fiber arrangement.

The protein localises to the periplasm. Functionally, involved in the assembly of lipopolysaccharide (LPS). Required for the translocation of LPS from the inner membrane to the outer membrane. May form a bridge between the inner membrane and the outer membrane, via interactions with LptC and LptD, thereby facilitating LPS transfer across the periplasm. Binds LPS. Important for cell envelope stability and essential for growth, cell viability and ability to cause infection in different animal models. This Pseudomonas aeruginosa (strain ATCC 15692 / DSM 22644 / CIP 104116 / JCM 14847 / LMG 12228 / 1C / PRS 101 / PAO1) protein is Lipopolysaccharide export system protein LptH.